A 284-amino-acid polypeptide reads, in one-letter code: Protein-S-isoprenylcysteine O-methyltransferase (284 aa).

The Cytoplasmic segment spans residues 1–16 (MAGCAARAPPGSEARL). Residues 17–33 (SLATFLLGASVLALPLL) form a helical membrane-spanning segment. The Lumenal portion of the chain corresponds to 34 to 41 (TRAGLQGR). The helical transmembrane segment at 42–59 (TGLALYVAGLNALLLLLY) threads the bilayer. Residues 60–69 (RPPRYQIAIR) are Cytoplasmic-facing. Residues 70 to 87 (ACFLGFVFGCGTLLSFSQ) traverse the membrane as a helical segment. At 88–92 (SSWSH) the chain is on the lumenal side. A helical membrane pass occupies residues 93 to 112 (FGWYMCSLSLFHYSEYLVTA). Over 113–131 (VNNPKSLSLDSFLLNHSLE) the chain is Cytoplasmic. Residues 132-149 (YTVAALSSWLEFTLENIF) form a helical membrane-spanning segment. Over 150–154 (WPELK) the chain is Lumenal. The chain crosses the membrane as a helical span at residues 155 to 174 (QITWLSVTGLLMVVFGECLR). The Cytoplasmic segment spans residues 175–212 (KAAMFTAGSNFNHVVQNEKSDTHTLVTSGVYAWFRHPS). Residues Gln-190, 197-200 (HTLV), Tyr-205, and 210-213 (HPSY) contribute to the S-adenosyl-L-methionine site. Residues 213–228 (YVGWFYWSIGTQVMLC) traverse the membrane as a helical segment. Residue Asn-229 is a topological domain, lumenal. The helical transmembrane segment at 230 to 244 (PICGVSYALTVWRFF) threads the bilayer. Over 245 to 284 (RDRTEEEEISLIHFFGEEYLEYKKRVPTGLPFIKGVKVDL) the chain is Cytoplasmic. Arg-247 is a binding site for substrate. Residue Glu-251 coordinates S-adenosyl-L-methionine.

This sequence belongs to the class VI-like SAM-binding methyltransferase superfamily. Isoprenylcysteine carboxyl methyltransferase family. In terms of tissue distribution, ubiquitously expressed. Expressed at higher levels in the cerebellum and putamen than in other brain regions. Abundant expression seen in the Purkinje cells and pontine neurons.

It localises to the endoplasmic reticulum membrane. The enzyme catalyses [protein]-C-terminal S-[(2E,6E)-farnesyl]-L-cysteine + S-adenosyl-L-methionine = [protein]-C-terminal S-[(2E,6E)-farnesyl]-L-cysteine methyl ester + S-adenosyl-L-homocysteine. Its activity is regulated as follows. Competitively inhibited by N-acetyl-S-trans,trans-farnesyl-l-cysteine (AFC). Functionally, catalyzes the post-translational methylation of isoprenylated C-terminal cysteine residues. In Homo sapiens (Human), this protein is Protein-S-isoprenylcysteine O-methyltransferase (ICMT).